The following is a 392-amino-acid chain: Phosphopentomutase (392 aa).

Mn(2+) is bound by residues D15, D287, H292, D328, H329, and H340.

Belongs to the phosphopentomutase family. The cofactor is Mn(2+).

Its subcellular location is the cytoplasm. It carries out the reaction 2-deoxy-alpha-D-ribose 1-phosphate = 2-deoxy-D-ribose 5-phosphate. The catalysed reaction is alpha-D-ribose 1-phosphate = D-ribose 5-phosphate. It participates in carbohydrate degradation; 2-deoxy-D-ribose 1-phosphate degradation; D-glyceraldehyde 3-phosphate and acetaldehyde from 2-deoxy-alpha-D-ribose 1-phosphate: step 1/2. In terms of biological role, isomerase that catalyzes the conversion of deoxy-ribose 1-phosphate (dRib-1-P) and ribose 1-phosphate (Rib-1-P) to deoxy-ribose 5-phosphate (dRib-5-P) and ribose 5-phosphate (Rib-5-P), respectively. In Syntrophotalea carbinolica (strain DSM 2380 / NBRC 103641 / GraBd1) (Pelobacter carbinolicus), this protein is Phosphopentomutase.